A 65-amino-acid polypeptide reads, in one-letter code: Large ribosomal subunit protein bL35 (65 aa).

The span at 1 to 43 (MPKMKTRRGAAKRFAKTGSGKFKRRKQGLRHILTKKTAKRKSR) shows a compositional bias: basic residues. The disordered stretch occupies residues 1–49 (MPKMKTRRGAAKRFAKTGSGKFKRRKQGLRHILTKKTAKRKSRLGQSAT).

It belongs to the bacterial ribosomal protein bL35 family.

This is Large ribosomal subunit protein bL35 from Maridesulfovibrio salexigens (strain ATCC 14822 / DSM 2638 / NCIMB 8403 / VKM B-1763) (Desulfovibrio salexigens).